The following is a 345-amino-acid chain: Histidinol-phosphate aminotransferase (345 aa).

Residue K205 is modified to N6-(pyridoxal phosphate)lysine.

The protein belongs to the class-II pyridoxal-phosphate-dependent aminotransferase family. Histidinol-phosphate aminotransferase subfamily. Homodimer. Pyridoxal 5'-phosphate serves as cofactor.

It catalyses the reaction L-histidinol phosphate + 2-oxoglutarate = 3-(imidazol-4-yl)-2-oxopropyl phosphate + L-glutamate. The protein operates within amino-acid biosynthesis; L-histidine biosynthesis; L-histidine from 5-phospho-alpha-D-ribose 1-diphosphate: step 7/9. In Parabacteroides distasonis (strain ATCC 8503 / DSM 20701 / CIP 104284 / JCM 5825 / NCTC 11152), this protein is Histidinol-phosphate aminotransferase.